We begin with the raw amino-acid sequence, 303 residues long: Trans-aconitate 2-methyltransferase (303 aa).

The segment at 271-303 (EGSGGSGGSGGSAGSAGCAGSGGSVGPAGEAGR) is disordered. The segment covering 272 to 303 (GSGGSGGSGGSAGSAGCAGSGGSVGPAGEAGR) has biased composition (gly residues).

Belongs to the methyltransferase superfamily. Tam family.

The protein localises to the cytoplasm. It carries out the reaction trans-aconitate + S-adenosyl-L-methionine = (E)-3-(methoxycarbonyl)pent-2-enedioate + S-adenosyl-L-homocysteine. Functionally, catalyzes the S-adenosylmethionine monomethyl esterification of trans-aconitate. In Streptomyces coelicolor (strain ATCC BAA-471 / A3(2) / M145), this protein is Trans-aconitate 2-methyltransferase.